We begin with the raw amino-acid sequence, 288 residues long: Peroxisomal protein PEX21 (288 aa).

C5 is covalently cross-linked (Glycyl cysteine thioester (Cys-Gly) (interchain with G-Cter in ubiquitin)).

The protein belongs to the peroxin-21 family. As to quaternary structure, interacts with PEX7. Interacts with PEX13. Interacts with SES1. In terms of processing, monoubiquitinated at Cys-5; acts as a signal for PEX21 extraction and is required for proper export from peroxisomes and recycling.

It is found in the cytoplasm. Its subcellular location is the cytosol. The protein resides in the peroxisome. In terms of biological role, receptor that mediates peroxisomal import of proteins containing a C-terminal PTS2-type peroxisomal targeting signal via its interaction with PEX7. Interaction with PEX7 only takes place when PEX7 is associated with cargo proteins containing a PTS2 peroxisomal targeting signal. PEX7 along with PTS2-containing cargo proteins are then translocated through the PEX13-PEX14 docking complex together with PEX21. Acts as an activator of the seryl-tRNA synthetase SES1 by increasing its binding to tRNA. The sequence is that of Peroxisomal protein PEX21 (PEX21) from Saccharomyces cerevisiae (strain ATCC 204508 / S288c) (Baker's yeast).